Here is an 884-residue protein sequence, read N- to C-terminus: Protein P (884 aa).

The segment at 1–184 (MHPFSRLFRN…GKPYSWEHRQ (184 aa)) is terminal protein domain (TP). Residues 185 to 387 (LVQHNGQQHK…YCIHHIVSSL (203 aa)) form a spacer region. The disordered stretch occupies residues 299–345 (RNSGHTTWFSSASNSNKSRSREKAYSSNSTSKRYSPPLNYEKSDFSS). A polymerase/reverse transcriptase domain (RT) region spans residues 388-729 (DDWGPCTVTG…YEELWPVVRQ (342 aa)). Residues 398 to 639 (DVTIKSPRTP…NHLHFMGYVI (242 aa)) enclose the Reverse transcriptase domain. Mg(2+) is bound by residues D470, D590, and D591.

It belongs to the hepadnaviridae P protein family.

The catalysed reaction is DNA(n) + a 2'-deoxyribonucleoside 5'-triphosphate = DNA(n+1) + diphosphate. It carries out the reaction Endonucleolytic cleavage to 5'-phosphomonoester.. Activated by host HSP70 and HSP40 in vitro to be able to bind the epsilon loop of the pgRNA. Because deletion of the RNase H region renders the protein partly chaperone-independent, the chaperones may be needed indirectly to relieve occlusion of the RNA-binding site by this domain. Inhibited by several reverse-transcriptase inhibitors: Lamivudine, Adefovir and Entecavir. Its function is as follows. Multifunctional enzyme that converts the viral RNA genome into dsDNA in viral cytoplasmic capsids. This enzyme displays a DNA polymerase activity that can copy either DNA or RNA templates, and a ribonuclease H (RNase H) activity that cleaves the RNA strand of RNA-DNA heteroduplexes in a partially processive 3'- to 5'-endonucleasic mode. Neo-synthesized pregenomic RNA (pgRNA) are encapsidated together with the P protein, and reverse-transcribed inside the nucleocapsid. Initiation of reverse-transcription occurs first by binding the epsilon loop on the pgRNA genome, and is initiated by protein priming, thereby the 5'-end of (-)DNA is covalently linked to P protein. Partial (+)DNA is synthesized from the (-)DNA template and generates the relaxed circular DNA (RC-DNA) genome. After budding and infection, the RC-DNA migrates in the nucleus, and is converted into a plasmid-like covalently closed circular DNA (cccDNA). The activity of P protein does not seem to be necessary for cccDNA generation, and is presumably released from (+)DNA by host nuclear DNA repair machinery. The protein is Protein P of Woodchuck hepatitis B virus (isolate 7) (WHV).